The following is a 238-amino-acid chain: Ribitol-5-phosphate cytidylyltransferase 2 (238 aa).

Residues L7–G10 and G81–T87 each bind CTP.

The protein belongs to the IspD/TarI cytidylyltransferase family. TarI subfamily.

It catalyses the reaction D-ribitol 5-phosphate + CTP + H(+) = CDP-L-ribitol + diphosphate. The protein operates within cell wall biogenesis; poly(ribitol phosphate) teichoic acid biosynthesis. Catalyzes the transfer of the cytidylyl group of CTP to D-ribitol 5-phosphate. The polypeptide is Ribitol-5-phosphate cytidylyltransferase 2 (Staphylococcus aureus (strain MRSA252)).